The following is a 45-amino-acid chain: Osteocalcin (45 aa).

Residues 1–44 enclose the Gla domain; it reads AGTAXGDLTPFQLESLREVCEVNLACEHMADTXGIVAAYTAYYG. Ca(2+)-binding residues include E14, E18, E21, and E27. A 4-carboxyglutamate mark is found at E14, E18, and E21. C20 and C26 are disulfide-bonded.

Belongs to the osteocalcin/matrix Gla protein family. Post-translationally, gamma-carboxyglutamate residues are formed by vitamin K dependent carboxylation by GGCX. These residues are essential for the binding of calcium.

The protein localises to the secreted. Functionally, the carboxylated form is one of the main organic components of the bone matrix, which constitutes 1-2% of the total bone protein. The carboxylated form binds strongly to apatite and calcium. The polypeptide is Osteocalcin (bglap) (Danio rerio (Zebrafish)).